We begin with the raw amino-acid sequence, 342 residues long: S-adenosylmethionine:tRNA ribosyltransferase-isomerase (342 aa).

It belongs to the QueA family. In terms of assembly, monomer.

Its subcellular location is the cytoplasm. The catalysed reaction is 7-aminomethyl-7-carbaguanosine(34) in tRNA + S-adenosyl-L-methionine = epoxyqueuosine(34) in tRNA + adenine + L-methionine + 2 H(+). Its pathway is tRNA modification; tRNA-queuosine biosynthesis. Its function is as follows. Transfers and isomerizes the ribose moiety from AdoMet to the 7-aminomethyl group of 7-deazaguanine (preQ1-tRNA) to give epoxyqueuosine (oQ-tRNA). The polypeptide is S-adenosylmethionine:tRNA ribosyltransferase-isomerase (Shouchella clausii (strain KSM-K16) (Alkalihalobacillus clausii)).